Here is a 643-residue protein sequence, read N- to C-terminus: MSLKMDNRDVAGKANRWFGMAQPKSGKMNMNILHQEELIAQKKREIEARMEQKARQSHVPSPQPPHPGEIADAHNSCISNKFANDGSFLQQFLKLQKAQTSTDSAPRAPPSMPTPSSLKKPLVLSKRTGLGLSSPTGPVKNYSHAKQLPVAHRPSVFQSPDDDEEEDYEQWLEIKVSPPEGAETRRVIEKLARFVAEGGPELEKVAMEDYKDNPAFTFLHDKNSREFLYYRRKVAEIRKEAQKPQAATQKVSPPEDEEAKNLAEKLARFIADGGPEVETIALQNNRENQAFSFLYDPNSQGYRYYRQKLDEFRKAKAGSTGSFPAPAPNPSLRRKSAPEALSGAVPPITACPTPVAPAPAVNPTPSIPGKPTATAAVKRKRKSRWGPEEDKVELPPAELAQRDIDASPSPLSVQDLKGLGYEKGKPVGLVGVTELSDAQKKQLKEQQEMQQMYDMIMQHKRAMQDMQLLWEKALQQHQHGYDSDEEVDSELGTWEHQLRRMEMDKTREWAEQLTQMGRGKHFIGDFLPPDELEKFMETFKALKEGREPDYSEYKEFKLTVENIGYQMLMKMGWKEGEGLGTEGQGIKNPVNKGATTIDGAGFGIDRPAELSKEDDEYEAFRKRMMLAYRFRPNPLNNPRRPYY.

Disordered regions lie at residues 48–69 (ARME…HPGE) and 97–119 (KAQT…SSLK). At Thr128 the chain carries Phosphothreonine. One copy of the SURP motif 1 repeat lies at 187 to 229 (VIEKLARFVAEGGPELEKVAMEDYKDNPAFTFLHDKNSREFLY). The residue at position 252 (Ser252) is a Phosphoserine. The SURP motif 2 repeat unit spans residues 262-305 (LAEKLARFIADGGPEVETIALQNNRENQAFSFLYDPNSQGYRYY). 2 disordered regions span residues 316–335 (KAGS…LRRK) and 360–393 (AVNP…DKVE). Residue Ser322 is modified to Phosphoserine. Positions 378-384 (KRKRKSR) match the Nuclear localization signal motif. Phosphoserine occurs at positions 407, 409, 412, and 483. The region spanning 560–607 (VENIGYQMLMKMGWKEGEGLGTEGQGIKNPVNKGATTIDGAGFGIDRP) is the G-patch domain.

Component of the spliceosome.

Its subcellular location is the nucleus. Its function is as follows. Plays a role in pre-mRNA splicing. In Mus musculus (Mouse), this protein is SURP and G-patch domain-containing protein 1 (Sugp1).